Here is a 213-residue protein sequence, read N- to C-terminus: Ribosomal RNA small subunit methyltransferase G (213 aa).

S-adenosyl-L-methionine-binding positions include glycine 75, phenylalanine 80, 128-129 (IE), and arginine 144.

This sequence belongs to the methyltransferase superfamily. RNA methyltransferase RsmG family.

The protein resides in the cytoplasm. The catalysed reaction is guanosine(527) in 16S rRNA + S-adenosyl-L-methionine = N(7)-methylguanosine(527) in 16S rRNA + S-adenosyl-L-homocysteine. Functionally, specifically methylates the N7 position of guanine in position 527 of 16S rRNA. The polypeptide is Ribosomal RNA small subunit methyltransferase G (Brucella ovis (strain ATCC 25840 / 63/290 / NCTC 10512)).